We begin with the raw amino-acid sequence, 377 residues long: tRNA-specific 2-thiouridylase MnmA (377 aa).

Residues 18 to 25 (GMSGGVDS) and methionine 44 contribute to the ATP site. Residues 104–106 (NPD) form an interaction with target base in tRNA region. The Nucleophile role is filled by cysteine 109. The cysteines at positions 109 and 209 are disulfide-linked. Residue glycine 134 coordinates ATP. Residues 159–161 (KDQ) form an interaction with tRNA region. The active-site Cysteine persulfide intermediate is cysteine 209. The segment at 324-325 (RY) is interaction with tRNA.

The protein belongs to the MnmA/TRMU family.

The protein localises to the cytoplasm. The catalysed reaction is S-sulfanyl-L-cysteinyl-[protein] + uridine(34) in tRNA + AH2 + ATP = 2-thiouridine(34) in tRNA + L-cysteinyl-[protein] + A + AMP + diphosphate + H(+). Its function is as follows. Catalyzes the 2-thiolation of uridine at the wobble position (U34) of tRNA, leading to the formation of s(2)U34. This is tRNA-specific 2-thiouridylase MnmA from Photobacterium profundum (strain SS9).